A 1708-amino-acid polypeptide reads, in one-letter code: Clathrin heavy chain 1 (1708 aa).

The tract at residues 1 to 492 is globular terminal domain; sequence MAAANAPIAM…VDNDLALKIY (492 aa). 7 WD40-like repeat regions span residues 25–67, 68–113, 114–155, 156–205, 206–270, 271–314, and 315–343; these read FVTF…RPIT, ADSA…MPEQ, VVFW…ANLA, NNQI…QALE, AHAA…PDFQ, DDFP…ISPD, and PIFL…ATVN. Positions 462–478 are binding site for the uncoating ATPase, involved in lattice disassembly; that stretch reads ENWLAEDKLECSEELGD. Residues 493–536 form a flexible linker region; the sequence is IKARATPKVVAAFAERREFDKILIYSKQVGYTPDYLFLLQTILR. A distal segment region spans residues 537 to 648; that stretch reads TDPQGAVNFA…RALQHYTELP (112 aa). The tract at residues 537-1708 is heavy chain arm; it reads TDPQGAVNFA…AYGMPPMGSY (1172 aa). CHCR repeat units follow at residues 551 to 697, 700 to 842, 847 to 986, 993 to 1138, 1142 to 1283, 1288 to 1434, and 1437 to 1580; these read QMEG…QIVV, AKEY…PEDF, ILSV…QLID, LPES…VSEA, FIRA…FRLA, LNII…DLIN, and LNVL…KECF. Positions 653-1708 are proximal segment; that stretch reads VMVNTHAIEP…AYGMPPMGSY (1056 aa). The segment at 1227–1536 is involved in binding clathrin light chain; the sequence is AAKIIYAFIS…YIYKKAGRWK (310 aa). Residues 1564–1708 are trimerization; it reads SEDLLVYFIE…AYGMPPMGSY (145 aa).

Belongs to the clathrin heavy chain family. As to quaternary structure, clathrin triskelions, composed of 3 heavy chains and 3 light chains, are the basic subunits of the clathrin coat.

The protein localises to the cytoplasmic vesicle membrane. Its subcellular location is the membrane. It localises to the coated pit. Its function is as follows. Clathrin is the major protein of the polyhedral coat of coated pits and vesicles. In Oryza sativa subsp. japonica (Rice), this protein is Clathrin heavy chain 1.